A 228-amino-acid chain; its full sequence is MSPSLTWHDVIGQEKEQPYFKDTLAYVAAERRAGKTIYPPQKDIFNAFRLTELDQVKVVILGQDPYHGPNQAHGLSFSVLPGVPAPPSLGNIYKELVTDIPGFQRPNHGFLQSWAEQGVLLLNTVLTVEAGKAHSHANLGWETFTDKVIVALNEHREGVIFMLWGSHAQKKGRIINTERHYILKAPHPSPLSAHRGFLGCKHFSQANQLLQQQNQQPIDWQPKLPAVE.

Catalysis depends on Asp-64, which acts as the Proton acceptor.

Belongs to the uracil-DNA glycosylase (UDG) superfamily. UNG family.

It is found in the cytoplasm. The catalysed reaction is Hydrolyzes single-stranded DNA or mismatched double-stranded DNA and polynucleotides, releasing free uracil.. Its function is as follows. Excises uracil residues from the DNA which can arise as a result of misincorporation of dUMP residues by DNA polymerase or due to deamination of cytosine. The sequence is that of Uracil-DNA glycosylase from Yersinia pseudotuberculosis serotype O:1b (strain IP 31758).